We begin with the raw amino-acid sequence, 393 residues long: S-adenosylmethionine synthase (393 aa).

ATP is bound at residue His-17. Asp-19 provides a ligand contact to Mg(2+). Glu-45 serves as a coordination point for K(+). Residues Glu-58 and Gln-106 each coordinate L-methionine. Residues 106–116 (QSAHIAQGVDA) form a flexible loop region. Residues 171 to 173 (DAK), 237 to 238 (KF), Asp-246, 252 to 253 (RK), Ala-269, and Lys-273 each bind ATP. Residue Asp-246 coordinates L-methionine. Lys-277 lines the L-methionine pocket.

Belongs to the AdoMet synthase family. Homotetramer; dimer of dimers. The cofactor is Mg(2+). It depends on K(+) as a cofactor.

It is found in the cytoplasm. It catalyses the reaction L-methionine + ATP + H2O = S-adenosyl-L-methionine + phosphate + diphosphate. It participates in amino-acid biosynthesis; S-adenosyl-L-methionine biosynthesis; S-adenosyl-L-methionine from L-methionine: step 1/1. Functionally, catalyzes the formation of S-adenosylmethionine (AdoMet) from methionine and ATP. The overall synthetic reaction is composed of two sequential steps, AdoMet formation and the subsequent tripolyphosphate hydrolysis which occurs prior to release of AdoMet from the enzyme. The protein is S-adenosylmethionine synthase of Ruegeria sp. (strain TM1040) (Silicibacter sp.).